Here is an 876-residue protein sequence, read N- to C-terminus: Dynein regulatory complex subunit 7 (876 aa).

Coiled coils occupy residues 1–33 and 258–295; these read MEVLREKVEEEEEAEREEAAERAERTEKLERVT and KFEQEQEEKRIQEIKDLEQRRLKEEEDRILEAEKAKPD. The segment at 1–40 is disordered; sequence MEVLREKVEEEEEAEREEAAERAERTEKLERVTKSAEVSR. A compositionally biased stretch (basic and acidic residues) spans 17–40; the sequence is EEAAERAERTEKLERVTKSAEVSR. The interval 385–412 is disordered; sequence SLTEEDEEGLDDDDDDVEDLGKEEEDKS. The segment covering 387–407 has biased composition (acidic residues); the sequence is TEEDEEGLDDDDDDVEDLGKE. Coiled-coil stretches lie at residues 679–710 and 784–809; these read QLKNEEKLSRHQAWESELEVLEILKLREEEEE and QRLIDKANLIQARFEKETQELQKKQQ.

Belongs to the DRC7 family. In terms of assembly, component of the nexin-dynein regulatory complex (N-DRC). Interacts with TCTE1/DRC5. Interacts with DRC3 and GAS8/DRC4. As to expression, expressed in diplotene and pachytene spermytocytes, and in round and elongating spermatids (at protein level). Strongly expressed in spleen and testis, faintly expressed in kidney, ovary and thymus. Abundantly expressed in the testis and is weakly expressed in the brain, thymus, lung and ovary. Expressed in ciliated cells.

Its subcellular location is the cell projection. The protein resides in the cilium. The protein localises to the flagellum. It localises to the cytoplasm. It is found in the cytoskeleton. Its subcellular location is the cilium axoneme. The protein resides in the flagellum axoneme. Component of the nexin-dynein regulatory complex (N-DRC) a key regulator of ciliary/flagellar motility which maintains the alignment and integrity of the distal axoneme and regulates microtubule sliding in motile axonemes. Essential for male fertility, sperm head morphogenesis and sperm flagellum formation. Not required for ciliogenesis in the brain and trachea. The protein is Dynein regulatory complex subunit 7 (Drc7) of Mus musculus (Mouse).